We begin with the raw amino-acid sequence, 128 residues long: Small ribosomal subunit protein uS9 (128 aa).

Belongs to the universal ribosomal protein uS9 family.

This Cytophaga hutchinsonii (strain ATCC 33406 / DSM 1761 / CIP 103989 / NBRC 15051 / NCIMB 9469 / D465) protein is Small ribosomal subunit protein uS9.